The primary structure comprises 148 residues: 3-hydroxyacyl-[acyl-carrier-protein] dehydratase FabZ (148 aa).

H50 is a catalytic residue.

Belongs to the thioester dehydratase family. FabZ subfamily.

The protein resides in the cytoplasm. The catalysed reaction is a (3R)-hydroxyacyl-[ACP] = a (2E)-enoyl-[ACP] + H2O. Involved in unsaturated fatty acids biosynthesis. Catalyzes the dehydration of short chain beta-hydroxyacyl-ACPs and long chain saturated and unsaturated beta-hydroxyacyl-ACPs. This is 3-hydroxyacyl-[acyl-carrier-protein] dehydratase FabZ from Lactobacillus helveticus (strain DPC 4571).